The following is a 245-amino-acid chain: Probable phosphatase YcdX (245 aa).

Zn(2+)-binding residues include histidine 7, histidine 9, histidine 15, histidine 40, glutamate 73, histidine 101, histidine 131, aspartate 192, and histidine 194.

This sequence belongs to the PHP family. In terms of assembly, homotrimer. Zn(2+) serves as cofactor.

In Escherichia coli O139:H28 (strain E24377A / ETEC), this protein is Probable phosphatase YcdX.